Here is a 359-residue protein sequence, read N- to C-terminus: Phospho-N-acetylmuramoyl-pentapeptide-transferase (359 aa).

10 consecutive transmembrane segments (helical) span residues 26 to 46 (TIYG…WVIN), 73 to 93 (TMGG…WADL), 98 to 118 (ILIT…DDYL), 134 to 154 (FLVQ…CPDF), 166 to 186 (FTPD…VGTS), 197 to 217 (GLAI…AYVA), 234 to 254 (CGEI…FLWF), 261 to 281 (VFMG…IAVI), 286 to 306 (ILLL…IIQV), and 338 to 358 (IVRF…TLKI).

It belongs to the glycosyltransferase 4 family. MraY subfamily. It depends on Mg(2+) as a cofactor.

Its subcellular location is the cell inner membrane. The enzyme catalyses UDP-N-acetyl-alpha-D-muramoyl-L-alanyl-gamma-D-glutamyl-meso-2,6-diaminopimeloyl-D-alanyl-D-alanine + di-trans,octa-cis-undecaprenyl phosphate = di-trans,octa-cis-undecaprenyl diphospho-N-acetyl-alpha-D-muramoyl-L-alanyl-D-glutamyl-meso-2,6-diaminopimeloyl-D-alanyl-D-alanine + UMP. The protein operates within cell wall biogenesis; peptidoglycan biosynthesis. Functionally, catalyzes the initial step of the lipid cycle reactions in the biosynthesis of the cell wall peptidoglycan: transfers peptidoglycan precursor phospho-MurNAc-pentapeptide from UDP-MurNAc-pentapeptide onto the lipid carrier undecaprenyl phosphate, yielding undecaprenyl-pyrophosphoryl-MurNAc-pentapeptide, known as lipid I. The protein is Phospho-N-acetylmuramoyl-pentapeptide-transferase of Desulforapulum autotrophicum (strain ATCC 43914 / DSM 3382 / VKM B-1955 / HRM2) (Desulfobacterium autotrophicum).